Here is a 151-residue protein sequence, read N- to C-terminus: Ribosome maturation factor RimP (151 aa).

The protein belongs to the RimP family.

It localises to the cytoplasm. Required for maturation of 30S ribosomal subunits. This chain is Ribosome maturation factor RimP, found in Vibrio atlanticus (strain LGP32) (Vibrio splendidus (strain Mel32)).